A 308-amino-acid polypeptide reads, in one-letter code: Cytochrome b (308 aa).

The next 4 helical transmembrane spans lie at Phe1–Thr21, Trp45–Ile66, Trp81–Leu101, and Phe146–Thr166. Heme b-binding residues include His51 and His65. Residues His150 and His164 each coordinate heme b. Residue His169 participates in a ubiquinone binding. 3 helical membrane passes run Met194–Ser214, Leu256–His276, and Leu288–Ser308.

This sequence belongs to the cytochrome b family. The cytochrome bc1 complex contains 11 subunits: 3 respiratory subunits (MT-CYB, CYC1 and UQCRFS1), 2 core proteins (UQCRC1 and UQCRC2) and 6 low-molecular weight proteins (UQCRH/QCR6, UQCRB/QCR7, UQCRQ/QCR8, UQCR10/QCR9, UQCR11/QCR10 and a cleavage product of UQCRFS1). This cytochrome bc1 complex then forms a dimer. Heme b serves as cofactor.

The protein resides in the mitochondrion inner membrane. In terms of biological role, component of the ubiquinol-cytochrome c reductase complex (complex III or cytochrome b-c1 complex) that is part of the mitochondrial respiratory chain. The b-c1 complex mediates electron transfer from ubiquinol to cytochrome c. Contributes to the generation of a proton gradient across the mitochondrial membrane that is then used for ATP synthesis. The sequence is that of Cytochrome b (MT-CYB) from Ptiloprora plumbea (Leaden honeyeater).